Here is a 380-residue protein sequence, read N- to C-terminus: Mitogen-activated protein kinase 3 (380 aa).

An N-acetylalanine modification is found at Ala-2. The Protein kinase domain maps to 43-331; that stretch reads YTQLQYIGEG…VEEALAHPYL (289 aa). ATP-binding positions include 49-57 and Lys-72; that span reads IGEGAYGMV. Asp-167 acts as the Proton acceptor in catalysis. Thr-199 bears the Phosphothreonine mark. Thr-203 bears the Phosphothreonine; by MAP2K1 and MAP2K2 mark. The short motif at 203 to 205 is the TXY element; the sequence is TEY. At Tyr-205 the chain carries Phosphotyrosine; by MAP2K1 and MAP2K2. Position 208 is a phosphothreonine; by autocatalysis (Thr-208).

This sequence belongs to the protein kinase superfamily. CMGC Ser/Thr protein kinase family. MAP kinase subfamily. Binds both upstream activators and downstream substrates in multimolecular complexes. Found in a complex with at least BRAF, HRAS, MAP2K1/MEK1, MAPK3 and RGS14. Interacts with ADAM15, ARRB2, CANX, DAPK1 (via death domain), HSF4, IER3, MAP2K1/MEK1, MORG1, NISCH, PEA15, SGK1 and MKNK2. MKNK2 isoform 1 binding prevents from dephosphorylation and inactivation. Interacts with TPR. Interacts with HSF1 (via D domain and preferentially with hyperphosphorylated form); this interaction occurs upon heat shock. Interacts with CDKN2AIP. Interacts with CAVIN4. Interacts with GIT1; this interaction is necessary for MAPK3 localization to focal adhesions. Interacts with ZNF263. Interacts with EBF4. It depends on Mg(2+) as a cofactor. Post-translationally, phosphorylated upon FLT3 and KIT signaling. Ligand-activated ALK induces tyrosine phosphorylation. Dephosphorylated by PTPRJ at Tyr-205. Dually phosphorylated on Thr-203 and Tyr-205, which activates the enzyme. In terms of processing, ubiquitinated by TRIM15 via 'Lys-63'-linked ubiquitination; leading to activation. Deubiquitinated by CYLD. As to expression, highest levels within the nervous system, expressed in different tissues, mostly in intestine, placenta and lung.

The protein localises to the cytoplasm. Its subcellular location is the nucleus. It is found in the membrane. It localises to the caveola. The protein resides in the cell junction. The protein localises to the focal adhesion. The catalysed reaction is L-seryl-[protein] + ATP = O-phospho-L-seryl-[protein] + ADP + H(+). It carries out the reaction L-threonyl-[protein] + ATP = O-phospho-L-threonyl-[protein] + ADP + H(+). Its activity is regulated as follows. Phosphorylated by MAP2K1/MEK1 and MAP2K2/MEK2 on Thr-203 and Tyr-205 in response to external stimuli like insulin or NGF. Both phosphorylations are required for activity. This phosphorylation causes dramatic conformational changes, which enable full activation and interaction of MAPK1/ERK2 with its substrates. Dephosphorylated and inactivated by DUSP3, DUSP6 and DUSP9. Its function is as follows. Serine/threonine kinase which acts as an essential component of the MAP kinase signal transduction pathway. MAPK1/ERK2 and MAPK3/ERK1 are the 2 MAPKs which play an important role in the MAPK/ERK cascade. They participate also in a signaling cascade initiated by activated KIT and KITLG/SCF. Depending on the cellular context, the MAPK/ERK cascade mediates diverse biological functions such as cell growth, adhesion, survival and differentiation through the regulation of transcription, translation, cytoskeletal rearrangements. The MAPK/ERK cascade also plays a role in initiation and regulation of meiosis, mitosis, and postmitotic functions in differentiated cells by phosphorylating a number of transcription factors. About 160 substrates have already been discovered for ERKs. Many of these substrates are localized in the nucleus, and seem to participate in the regulation of transcription upon stimulation. However, other substrates are found in the cytosol as well as in other cellular organelles, and those are responsible for processes such as translation, mitosis and apoptosis. Moreover, the MAPK/ERK cascade is also involved in the regulation of the endosomal dynamics, including lysosome processing and endosome cycling through the perinuclear recycling compartment (PNRC); as well as in the fragmentation of the Golgi apparatus during mitosis. The substrates include transcription factors (such as ATF2, BCL6, ELK1, ERF, FOS, HSF4 or SPZ1), cytoskeletal elements (such as CANX, CTTN, GJA1, MAP2, MAPT, PXN, SORBS3 or STMN1), regulators of apoptosis (such as BAD, BTG2, CASP9, DAPK1, IER3, MCL1 or PPARG), regulators of translation (such as EIF4EBP1) and a variety of other signaling-related molecules (like ARHGEF2, DEPTOR, FRS2 or GRB10). Protein kinases (such as RAF1, RPS6KA1/RSK1, RPS6KA3/RSK2, RPS6KA2/RSK3, RPS6KA6/RSK4, SYK, MKNK1/MNK1, MKNK2/MNK2, RPS6KA5/MSK1, RPS6KA4/MSK2, MAPKAPK3 or MAPKAPK5) and phosphatases (such as DUSP1, DUSP4, DUSP6 or DUSP16) are other substrates which enable the propagation the MAPK/ERK signal to additional cytosolic and nuclear targets, thereby extending the specificity of the cascade. This is Mitogen-activated protein kinase 3 (Mapk3) from Rattus norvegicus (Rat).